Here is a 70-residue protein sequence, read N- to C-terminus: Large ribosomal subunit protein uL29 (70 aa).

Belongs to the universal ribosomal protein uL29 family.

The polypeptide is Large ribosomal subunit protein uL29 (rpl29) (Methanocaldococcus jannaschii (strain ATCC 43067 / DSM 2661 / JAL-1 / JCM 10045 / NBRC 100440) (Methanococcus jannaschii)).